Consider the following 355-residue polypeptide: Probable tRNA-dihydrouridine synthase 1 (355 aa).

Residues Pro-48–Ser-50 and Gln-102 each bind FMN. The active-site Proton donor is Cys-132. Residues Lys-171, Asn-232–Asp-234, and Ser-256–Arg-257 contribute to the FMN site.

It belongs to the Dus family. FMN serves as cofactor.

The enzyme catalyses a 5,6-dihydrouridine in tRNA + NAD(+) = a uridine in tRNA + NADH + H(+). The catalysed reaction is a 5,6-dihydrouridine in tRNA + NADP(+) = a uridine in tRNA + NADPH + H(+). Functionally, catalyzes the synthesis of 5,6-dihydrouridine (D), a modified base found in the D-loop of most tRNAs, via the reduction of the C5-C6 double bond in target uridines. This is Probable tRNA-dihydrouridine synthase 1 (dus1) from Synechocystis sp. (strain ATCC 27184 / PCC 6803 / Kazusa).